The primary structure comprises 151 residues: Caveolin-3 (151 aa).

At 1–83 (MMAEEHTDLE…RLLSTLLGVP (83 aa)) the chain is on the cytoplasmic side. K38 is covalently cross-linked (Glycyl lysine isopeptide (Lys-Gly) (interchain with G-Cter in SUMO3)). A required for interaction with DAG1 region spans residues 64-114 (TFTVSKYWCYRLLSTLLGVPLALLWGFLFACISFCHIWAVVPCIKSYLIEI). An intramembrane region (helical) is located at residues 84–104 (LALLWGFLFACISFCHIWAVV). Residues 105–151 (PCIKSYLIEIQCISHIYSLCIRTFCNPLFAALGQVCSNIKVMLRKEV) lie on the Cytoplasmic side of the membrane.

The protein belongs to the caveolin family. In terms of assembly, homooligomer. Interacts with DYSF. Interacts with DLG1 and KCNA5; forms a ternary complex. Interacts with DAG1 (via its C-terminal); the interaction prevents binding of DAG1 with DMD. Interacts with TRIM72. Interacts with MUSK; may regulate MUSK signaling. Interacts with POPDC1. Interacts with CAVIN1, CAVIN2 and CAVIN4. In terms of processing, sumoylation with SUMO3 by PIAS4 may reduce agonist-induced internalization and desensitization of adrenergic receptor ABRD2.

It localises to the golgi apparatus membrane. The protein localises to the cell membrane. Its subcellular location is the membrane. It is found in the caveola. The protein resides in the sarcolemma. May act as a scaffolding protein within caveolar membranes. Interacts directly with G-protein alpha subunits and can functionally regulate their activity. May also regulate voltage-gated potassium channels. Plays a role in the sarcolemma repair mechanism of both skeletal muscle and cardiomyocytes that permits rapid resealing of membranes disrupted by mechanical stress. Mediates the recruitment of CAVIN2 and CAVIN3 proteins to the caveolae. This chain is Caveolin-3 (CAV3), found in Bos taurus (Bovine).